The chain runs to 430 residues: Adenylosuccinate synthetase (430 aa).

GTP-binding positions include 12 to 18 (GDEGKGK) and 40 to 42 (GHT). Asp13 functions as the Proton acceptor in the catalytic mechanism. Residues Asp13 and Gly40 each coordinate Mg(2+). Residues 13 to 16 (DEGK), 38 to 41 (NAGH), Thr128, Arg142, Gln223, Thr238, and Arg302 contribute to the IMP site. Catalysis depends on His41, which acts as the Proton donor. Position 298–304 (298–304 (TTTGRPR)) interacts with substrate. GTP-binding positions include Arg304, 330–332 (SID), and 412–414 (SVG).

Belongs to the adenylosuccinate synthetase family. Homodimer. It depends on Mg(2+) as a cofactor.

The protein localises to the cytoplasm. The enzyme catalyses IMP + L-aspartate + GTP = N(6)-(1,2-dicarboxyethyl)-AMP + GDP + phosphate + 2 H(+). It participates in purine metabolism; AMP biosynthesis via de novo pathway; AMP from IMP: step 1/2. Its function is as follows. Plays an important role in the de novo pathway of purine nucleotide biosynthesis. Catalyzes the first committed step in the biosynthesis of AMP from IMP. This is Adenylosuccinate synthetase from Streptococcus suis (strain 98HAH33).